We begin with the raw amino-acid sequence, 474 residues long: Shugoshin-1 (474 aa).

4 disordered regions span residues 1–53 (MTST…KPNA), 189–226 (VESQ…NQGS), 322–356 (NSKQ…RCSK), and 422–442 (VSME…RKSN). 2 stretches are compositionally biased toward polar residues: residues 12 to 22 (GSLNPPHSNPS) and 190 to 201 (ESQSAVSSNTVC). A compositionally biased stretch (basic residues) spans 211–220 (KRMPQRRRSS). Composition is skewed to polar residues over residues 322-341 (NSKQ…NTVD) and 422-431 (VSMEQRTNQE).

Belongs to the shugoshin family. Highly expressed in tissues containing meiocytes. Expressed at much lower level in leaves and pollen-containing flowers.

It is found in the nucleus. It localises to the chromosome. The protein localises to the centromere. In terms of biological role, plays a central role in chromosome cohesion during meiosis I by preventing premature dissociation of cohesin complex from centromeres after prophase, when most of cohesin complex dissociates from chromosomes arms. Required for maintenance of centromeric cohesion before prophase II and correct segregation of chromatids during meiosis II. Has apparently no function in mitosis. The polypeptide is Shugoshin-1 (Zea mays (Maize)).